A 313-amino-acid chain; its full sequence is Ribosomal RNA small subunit methyltransferase H (313 aa).

S-adenosyl-L-methionine-binding positions include 35 to 37, D55, F80, D102, and Q109; that span reads GGH.

It belongs to the methyltransferase superfamily. RsmH family.

The protein resides in the cytoplasm. It catalyses the reaction cytidine(1402) in 16S rRNA + S-adenosyl-L-methionine = N(4)-methylcytidine(1402) in 16S rRNA + S-adenosyl-L-homocysteine + H(+). Its function is as follows. Specifically methylates the N4 position of cytidine in position 1402 (C1402) of 16S rRNA. This chain is Ribosomal RNA small subunit methyltransferase H, found in Shewanella amazonensis (strain ATCC BAA-1098 / SB2B).